Here is a 247-residue protein sequence, read N- to C-terminus: Chromosome partition protein MukE (247 aa).

A disordered region spans residues 213–247 (AQSLQEEKNGLKDNMDQSAVENEQYFENEENEGIA). Basic and acidic residues predominate over residues 217–227 (QEEKNGLKDNM). Residues 236–247 (QYFENEENEGIA) show a composition bias toward acidic residues.

The protein belongs to the MukE family. Interacts, and probably forms a ternary complex, with MukF and MukB. The complex formation is stimulated by calcium or magnesium.

It localises to the cytoplasm. Its subcellular location is the nucleoid. Involved in chromosome condensation, segregation and cell cycle progression. May participate in facilitating chromosome segregation by condensation DNA from both sides of a centrally located replisome during cell division. Probably acts via its interaction with MukB and MukF. The polypeptide is Chromosome partition protein MukE (Histophilus somni (strain 2336) (Haemophilus somnus)).